The chain runs to 225 residues: Putative tyrosine-protein phosphatase OCA1 (225 aa).

Acidic residues predominate over residues 1–11 (MTDNCREDDDN). The tract at residues 1-24 (MTDNCREDDDNLGTSGDNALSAPT) is disordered. The segment covering 12–24 (LGTSGDNALSAPT) has biased composition (polar residues). Residues 42–196 (NFCPVERYLY…FDTKSVTIDK (155 aa)) form the Tyrosine-protein phosphatase domain. The Phosphocysteine intermediate role is filled by Cys-138.

Belongs to the protein-tyrosine phosphatase family.

It is found in the cytoplasm. The catalysed reaction is O-phospho-L-tyrosyl-[protein] + H2O = L-tyrosyl-[protein] + phosphate. Functionally, putative tyrosine-protein phosphatase required for protection against superoxide stress. The sequence is that of Putative tyrosine-protein phosphatase OCA1 (OCA1) from Eremothecium gossypii (strain ATCC 10895 / CBS 109.51 / FGSC 9923 / NRRL Y-1056) (Yeast).